A 483-amino-acid polypeptide reads, in one-letter code: MORN repeat-containing protein 1 (483 aa).

Ser18 bears the Phosphoserine mark. MORN repeat units follow at residues Tyr39–Tyr61, Tyr62–Asn84, Tyr86–His108, Tyr109–Val131, Tyr132–Lys154, Tyr155–Thr177, and Tyr178–Thr200. The segment at Glu392 to Glu427 is disordered. A compositionally biased stretch (basic and acidic residues) spans Ala394 to Pro404. Ser403 bears the Phosphoserine mark. Positions Thr418 to Glu427 are enriched in polar residues.

This Rattus norvegicus (Rat) protein is MORN repeat-containing protein 1 (Morn1).